Consider the following 30-residue polypeptide: Snake venom serine protease (30 aa).

The Peptidase S1 domain maps to 1–30; that stretch reads VIGGDECNINEHRFLVALYDPDGFLSGGIL.

It belongs to the peptidase S1 family. Snake venom subfamily. In terms of assembly, monomer. N-Glycosylated. In terms of tissue distribution, expressed by the venom gland.

It localises to the secreted. Inhibited by diisopropylfluorophosphate (DFP). Snake venom serine protease that catalyzes the hydrolysis of arginine esters, kallikrein substrates Pro-Phe-Arg-MCA and Z-Phe-Arg-MCA. Cleaves kininogen analogs to release bradykinin. Induces contraction of the isolated rat uterus directly at high concentrations, but provokes more forceful contractions when injected in presence of bovine plasma. Shows capillary permeability-increasing activity and hypotensive activity on the anesthetized rat. This chain is Snake venom serine protease, found in Crotalus viridis viridis (Prairie rattlesnake).